Reading from the N-terminus, the 64-residue chain is MPKQKTHSGAKKRFKVTGTGKIMKQQAGMRHNLEVKSSGRKARLNQDQPLAKADMKVAKKLLGR.

The protein belongs to the bacterial ribosomal protein bL35 family.

The chain is Large ribosomal subunit protein bL35 from Clavibacter michiganensis subsp. michiganensis (strain NCPPB 382).